We begin with the raw amino-acid sequence, 82 residues long: Exodeoxyribonuclease 7 small subunit (82 aa).

Belongs to the XseB family. In terms of assembly, heterooligomer composed of large and small subunits.

Its subcellular location is the cytoplasm. It carries out the reaction Exonucleolytic cleavage in either 5'- to 3'- or 3'- to 5'-direction to yield nucleoside 5'-phosphates.. In terms of biological role, bidirectionally degrades single-stranded DNA into large acid-insoluble oligonucleotides, which are then degraded further into small acid-soluble oligonucleotides. The chain is Exodeoxyribonuclease 7 small subunit from Mycobacterium marinum (strain ATCC BAA-535 / M).